The sequence spans 91 residues: Small ribosomal subunit protein bS20 (91 aa).

The disordered stretch occupies residues 1–25 (MANTKSAEKRHRQSLKRRARNVTVR). The segment covering 8 to 20 (EKRHRQSLKRRAR) has biased composition (basic residues).

Belongs to the bacterial ribosomal protein bS20 family.

Binds directly to 16S ribosomal RNA. The protein is Small ribosomal subunit protein bS20 of Myxococcus xanthus (strain DK1622).